Here is a 687-residue protein sequence, read N- to C-terminus: MEQSYGGYGAWSAGPANTQGTYGSGVASWQGYENYSYYNAQNTSVPTGTPYSYGPASWEATKASDGGLAAGSSAMHVASFAPEPCTDNSDSLIAKINQRLDMLSKEGGRGGISSGGEGMQDRDSSFRFQPYESYDSRPCMPEHTPYRPSYSYDYDFDLGTDRNGSFGGTFNDCRDPTPERGALDGFLRGRGQGRFQDRSNSSTFIRSDPFMPPSASSEPLSTTWSELNYMGGRGLGGPSTNRPPPSLFSQSMAPDYSMMGMQGVGGFGGTMPYGCGRSQTRIRDWPRRRGFERFGPDNMGRKRKPFPLYEEPDAKLARADSEGDLSENDDGAGDLRSGDEEFRGEDDLCDSRKQRGEKEDEDEDVKKRREKQRRRDRMRDRAADRIQFACSVCKFRSFEDEEIQKHLQSKFHKETLRFISTKLPDKTVEFLQEYIINRNKKIEKRRQELLEKESPKPKPDPFKGIGQEHFFKRIEAAHCLACDMLIPAQHQLLQRHLHSVDHNHNRRLAAEQFKKTSLHVAKSVLNNKHIVKMLEKYLKGEDPFVNETADLETEGDENLGEEKETPEEVAAEVLAEVITAAVKAVEGDGEPAAEHSDVLAEVEGPVDTAEAGSDSHTGKLLEEQTCETASETRNMEDMARGEAAEARNEAAVPAAAAGSPVPVIAIPGILEDELEQTDAEAKDTPTE.

Positions 1–195 (MEQSYGGYGA…FLRGRGQGRF (195 aa)) are interaction with MCM2. The interval 1 to 210 (MEQSYGGYGA…SSTFIRSDPF (210 aa)) is interaction with DPY30. Serine 72 carries the post-translational modification Phosphoserine. The segment at 104-124 (SKEGGRGGISSGGEGMQDRDS) is disordered. An Asymmetric dimethylarginine; alternate modification is found at arginine 109. At arginine 109 the chain carries Omega-N-methylarginine; alternate. Over residues 109-118 (RGGISSGGEG) the composition is skewed to gly residues. Residues 109–201 (RGGISSGGEG…QGRFQDRSNS (93 aa)) form an interaction with DDX5 region. The tract at residues 127–152 (RFQPYESYDSRPCMPEHTPYRPSYSY) is nuclear matrix targeting site. Positions 189-221 (GRGQGRFQDRSNSSTFIRSDPFMPPSASSEPLS) are disordered. A Phosphoserine modification is found at serine 199. 2 positions are modified to omega-N-methylarginine: arginine 233 and arginine 277. The disordered stretch occupies residues 278–380 (SQTRIRDWPR…KQRRRDRMRD (103 aa)). Basic and acidic residues-rich tracts occupy residues 281–295 (RIRDWPRRRGFERFG) and 312–321 (PDAKLARADS). Positions 287–304 (RRRGFERFGPDNMGRKRK) match the Bipartite nuclear localization signal motif. Lysine 315 is covalently cross-linked (Glycyl lysine isopeptide (Lys-Gly) (interchain with G-Cter in SUMO2)). Serine 321, serine 326, and serine 337 each carry phosphoserine. The span at 322–332 (EGDLSENDDGA) shows a compositional bias: acidic residues. Residues 336–358 (RSGDEEFRGEDDLCDSRKQRGEK) show a composition bias toward basic and acidic residues. The segment at 385–448 (RIQFACSVCK…NKKIEKRRQE (64 aa)) is involved in chromatin-binding. C2H2 AKAP95-type zinc fingers lie at residues 390–412 (CSVCKFRSFEDEEIQKHLQSKFH) and 479–502 (CLACDMLIPAQHQLLQRHLHSVDH). An involved in condensin complex recruitment region spans residues 523–565 (SVLNNKHIVKMLEKYLKGEDPFVNETADLETEGDENLGEEKET). Threonine 553 is modified (phosphothreonine). Residue lysine 563 forms a Glycyl lysine isopeptide (Lys-Gly) (interchain with G-Cter in SUMO2) linkage. An RII-binding region spans residues 568–585 (EVAAEVLAEVITAAVKAV). Residues 572–589 (EVLAEVITAAVKAVEGDG) are required for interaction with MYCBP. The interval 606-687 (VDTAEAGSDS…DAEAKDTPTE (82 aa)) is disordered. Positions 633–648 (RNMEDMARGEAAEARN) are enriched in basic and acidic residues. The span at 649–666 (EAAVPAAAAGSPVPVIAI) shows a compositional bias: low complexity. Phosphoserine is present on serine 659.

The protein belongs to the AKAP95 family. Binds to dimeric RII-alpha regulatory subunit of PKA during mitosis. Interacts (via C-terminus) with FIGN. Interacts with NCAPD2, CCND1, CCND3, MCM2, RPS6KA1, PDE4A, CASP3. Interacts with DDX5, CCNE1. Interacts with NFKB1; detetcted in the cytoplasm. Interacts with MYCBP; MYCBP is translocated to the nucleus and the interaction prevents the association of the PKA catalytic subunit leading to suppression of PKA activity. Interacts with DPY30; mediating AKAP8 association with at least the MLL4/WBP7 HMT complex. Interacts with HDAC3; increased during mitosis. Interacts with GJA1; in the nucleus and in the nuclear membrane; the nuclear association increases with progress of cell cycle G1, S and G2 phase and decreases in M phase. Post-translationally, phosphorylated on tyrosine residues probably by SRC subfamily protein kinases; multiple phosphorylation is leading to dissociation from nuclear structures implicated in chromatin structural changes. In terms of tissue distribution, widely expressed. The protein has been detected in liver, fibroblasts, granulosa, myoblast, lymphoma and Sertoli cells.

The protein resides in the nucleus matrix. Its subcellular location is the nucleus. It is found in the nucleolus. The protein localises to the cytoplasm. Functionally, anchoring protein that mediates the subcellular compartmentation of cAMP-dependent protein kinase (PKA type II). Acts as an anchor for a PKA-signaling complex onto mitotic chromosomes, which is required for maintenance of chromosomes in a condensed form throughout mitosis. Recruits condensin complex subunit NCAPD2 to chromosomes required for chromatin condensation; the function appears to be independent from PKA-anchoring. May help to deliver cyclin D/E to CDK4 to facilitate cell cycle progression. Required for cell cycle G2/M transition and histone deacetylation during mitosis. In mitotic cells recruits HDAC3 to the vicinity of chromatin leading to deacetylation and subsequent phosphorylation at 'Ser-10' of histone H3; in this function may act redundantly with AKAP8L. Involved in nuclear retention of RPS6KA1 upon ERK activation thus inducing cell proliferation. May be involved in regulation of DNA replication by acting as scaffold for MCM2. Enhances HMT activity of the KMT2 family MLL4/WBP7 complex and is involved in transcriptional regulation. In a teratocarcinoma cell line is involved in retinoic acid-mediated induction of developmental genes implicating H3 'Lys-4' methylation. May be involved in recruitment of active CASP3 to the nucleus in apoptotic cells. May act as a carrier protein of GJA1 for its transport to the nucleus. May play a repressive role in the regulation of rDNA transcription. Preferentially binds GC-rich DNA in vitro. In cells, associates with ribosomal RNA (rRNA) chromatin, preferentially with rRNA promoter and transcribed regions. Involved in modulation of Toll-like receptor signaling. Required for the cAMP-dependent suppression of TNF-alpha in early stages of LPS-induced macrophage activation; the function probably implicates targeting of PKA to NFKB1. The polypeptide is A-kinase anchor protein 8 (Akap8) (Rattus norvegicus (Rat)).